The primary structure comprises 739 residues: MSTSSTPSAKPMAEMAAEFGLKPAEYDVVLKRLGREPNLVELGVFSVMWSEHCSYKSSKNQLKKFPIDGPRVICGPGENAGVIDIGDGDAIIFKMESHNHPSYIEPYQGAATGVGGIMRDVFTMGARPIALLNALRFGDPSHPKTKRLVDGVVAGIAGYGNCVGVPTVAGETNFHKGYNGNILVNAMCVGLAKADSIFYSAAPGPGLAVVYFGSKTGRDGIHGATMSSAEFSEDSEEKRPTVQVGDPFAEKLLIEATLELMATGAVAAIQDMGAAGLTSSSVEMAGKGGVGIELNMDMVPQRETGMSAYEMMLSESQERMLAVLKPGREQDGHAIFEKWGLDAAVIGYTTDTGRLVLKHHGETVCDVPLAPLFDDAPLYDRPWVQPALQPRLDPAAVPAPTNWNEAVLKIIGCPDMASKRWLWEQYDRHVMADTLEDSATGCDAGIVRIHGTGKAIAVTSDCTPRYVQADPYEGGKQAVAEAWRNLTAAGALPIAITDNLNFGSPEKPETMGQIVRATDGMAEACRALDFPVVSGNVSLYNETNGVAIPPTPTVGGVGLLEDYDLRTGFGNVAEGDTLVLVGETRGELGASIYLREILGREDGAPPPVDLALERKTGDFVRGLISSGLVAGVHDLSDGGLLVAAADVALASKIGVTLNATSQTHAHAYLLGEDQARYLIATPDPDAVLEAAKEAGVHANVAGVAGGEAFASDGLFSVSLDALRAAHEAWLPGYMSAPKA.

H52 is a catalytic residue. ATP contacts are provided by Y55 and K94. Residue E96 participates in Mg(2+) binding. Substrate-binding positions include 97 to 100 (SHNH) and R119. The active-site Proton acceptor is the H98. Residue D120 coordinates Mg(2+). Q243 is a binding site for substrate. D271 provides a ligand contact to Mg(2+). Residue 315-317 (ESQ) participates in substrate binding. ATP is bound by residues D498 and G535. Mg(2+) is bound at residue N536. S538 is a binding site for substrate.

This sequence belongs to the FGAMS family. In terms of assembly, monomer. Part of the FGAM synthase complex composed of 1 PurL, 1 PurQ and 2 PurS subunits.

The protein resides in the cytoplasm. The enzyme catalyses N(2)-formyl-N(1)-(5-phospho-beta-D-ribosyl)glycinamide + L-glutamine + ATP + H2O = 2-formamido-N(1)-(5-O-phospho-beta-D-ribosyl)acetamidine + L-glutamate + ADP + phosphate + H(+). It functions in the pathway purine metabolism; IMP biosynthesis via de novo pathway; 5-amino-1-(5-phospho-D-ribosyl)imidazole from N(2)-formyl-N(1)-(5-phospho-D-ribosyl)glycinamide: step 1/2. Its function is as follows. Part of the phosphoribosylformylglycinamidine synthase complex involved in the purines biosynthetic pathway. Catalyzes the ATP-dependent conversion of formylglycinamide ribonucleotide (FGAR) and glutamine to yield formylglycinamidine ribonucleotide (FGAM) and glutamate. The FGAM synthase complex is composed of three subunits. PurQ produces an ammonia molecule by converting glutamine to glutamate. PurL transfers the ammonia molecule to FGAR to form FGAM in an ATP-dependent manner. PurS interacts with PurQ and PurL and is thought to assist in the transfer of the ammonia molecule from PurQ to PurL. The protein is Phosphoribosylformylglycinamidine synthase subunit PurL of Caulobacter vibrioides (strain ATCC 19089 / CIP 103742 / CB 15) (Caulobacter crescentus).